The chain runs to 94 residues: Small ribosomal subunit protein bS18 (94 aa).

It belongs to the bacterial ribosomal protein bS18 family. Part of the 30S ribosomal subunit. Forms a tight heterodimer with protein bS6.

Binds as a heterodimer with protein bS6 to the central domain of the 16S rRNA, where it helps stabilize the platform of the 30S subunit. The chain is Small ribosomal subunit protein bS18 from Polaromonas naphthalenivorans (strain CJ2).